A 329-amino-acid polypeptide reads, in one-letter code: Serine/threonine-protein phosphatase PP1-alpha (329 aa).

4 residues coordinate Mn(2+): aspartate 64, histidine 66, aspartate 92, and asparagine 124. Residue histidine 125 is the Proton donor of the active site. Mn(2+) is bound by residues histidine 173 and histidine 248. A disordered region spans residues 309–329 (GMNSGRPAVGGGRPGTTAGKK).

Belongs to the PPP phosphatase family. PP-1 subfamily. Interacts with lab-1; the interaction is direct. Interacts with knl-1; the interaction is direct. The cofactor is Mn(2+).

The catalysed reaction is O-phospho-L-seryl-[protein] + H2O = L-seryl-[protein] + phosphate. It catalyses the reaction O-phospho-L-threonyl-[protein] + H2O = L-threonyl-[protein] + phosphate. Its function is as follows. Serine/threonine-protein phosphatase which antagonizes the function of air-2 in the regulation of chromosome cohesion. Dephosphorylates histone H3 at 'Ser-10'. Dephosphorylates translation initiation factor eIF2alpha. Involved in the activation of chloride channel clh-3 during cell swelling and meiotic maturation. In Caenorhabditis briggsae, this protein is Serine/threonine-protein phosphatase PP1-alpha (gsp-1).